The following is a 92-amino-acid chain: Cell division topological specificity factor (92 aa).

The protein belongs to the MinE family.

Its function is as follows. Prevents the cell division inhibition by proteins MinC and MinD at internal division sites while permitting inhibition at polar sites. This ensures cell division at the proper site by restricting the formation of a division septum at the midpoint of the long axis of the cell. This is Cell division topological specificity factor from Desulforamulus reducens (strain ATCC BAA-1160 / DSM 100696 / MI-1) (Desulfotomaculum reducens).